The chain runs to 94 residues: Integration host factor subunit beta (94 aa).

It belongs to the bacterial histone-like protein family. As to quaternary structure, heterodimer of an alpha and a beta chain.

Its function is as follows. This protein is one of the two subunits of integration host factor, a specific DNA-binding protein that functions in genetic recombination as well as in transcriptional and translational control. This is Integration host factor subunit beta from Buchnera aphidicola subsp. Acyrthosiphon pisum (strain 5A).